The following is a 57-amino-acid chain: Ribosome modulation factor 1 (57 aa).

Residues 1 to 14 are compositionally biased toward basic residues; sequence MKRQKRDRQSRAHT. Residues 1-24 form a disordered region; sequence MKRQKRDRQSRAHTRGYQAGISGR.

The protein belongs to the ribosome modulation factor family.

It localises to the cytoplasm. During stationary phase, converts 70S ribosomes to an inactive dimeric form (100S ribosomes). This chain is Ribosome modulation factor 1, found in Colwellia psychrerythraea (strain 34H / ATCC BAA-681) (Vibrio psychroerythus).